The chain runs to 338 residues: 4-hydroxy-2-oxovalerate aldolase (338 aa).

Residues proline 4–methionine 254 enclose the Pyruvate carboxyltransferase domain. Residue arginine 12–aspartate 13 coordinates substrate. Aspartate 13 provides a ligand contact to Mn(2+). The active-site Proton acceptor is histidine 16. Positions 166 and 193 each coordinate substrate. Positions 193 and 195 each coordinate Mn(2+). Tyrosine 284 contacts substrate.

This sequence belongs to the 4-hydroxy-2-oxovalerate aldolase family.

The enzyme catalyses (S)-4-hydroxy-2-oxopentanoate = acetaldehyde + pyruvate. This chain is 4-hydroxy-2-oxovalerate aldolase, found in Roseiflexus sp. (strain RS-1).